Consider the following 98-residue polypeptide: Signal peptidase complex subunit 1 (98 aa).

Over 1–18 (MLDIQTHMDFAGQGKAER) the chain is Cytoplasmic. A helical membrane pass occupies residues 19 to 38 (WSRFIITFFGIVGLVYGAFV). Residues 39–42 (QQFS) lie on the Lumenal side of the membrane. The helical transmembrane segment at 43–65 (QTVYILGAGFVLSSLITIPPWPL) threads the bilayer. Topologically, residues 66-98 (YRRNALKWQKPIDTDAKSSSSESGDEGKKKKKQ) are cytoplasmic. Positions 78–98 (DTDAKSSSSESGDEGKKKKKQ) are disordered. Phosphoserine occurs at positions 84, 85, 86, and 88.

It belongs to the SPCS1 family. Component of the signal peptidase complex (SPC) composed of a catalytic subunit twr/SEC11 and three accessory subunits Spase12/SPCS1, Spase25/SPCS2 and Spase22-23/SPCS3. The complex induces a local thinning of the ER membrane which is used to measure the length of the signal peptide (SP) h-region of protein substrates. This ensures the selectivity of the complex towards h-regions shorter than 18-20 amino acids.

Its subcellular location is the endoplasmic reticulum membrane. In terms of biological role, component of the signal peptidase complex (SPC) which catalyzes the cleavage of N-terminal signal sequences from nascent proteins as they are translocated into the lumen of the endoplasmic reticulum. Dispensable for SPC enzymatic activity. Functionally, (Microbial infection) Plays an important role in infection by flaviviruses such as West Nile virus and Dengue virus type 2. In Drosophila melanogaster (Fruit fly), this protein is Signal peptidase complex subunit 1 (Spase12).